A 655-amino-acid polypeptide reads, in one-letter code: RalA-binding protein 1-A (655 aa).

The disordered stretch occupies residues 1 to 153 (MTECFLPPAS…KKSKDLTAAD (153 aa)). Basic and acidic residues predominate over residues 52–68 (DILHEPPDIVSEDEKDH). 69-74 (GKKKGK) is a binding site for ATP. 2 stretches are compositionally biased toward basic residues: residues 69 to 79 (GKKKGKFKKKE) and 102 to 118 (KIKR…PSFS). Residues 102–119 (KIKRSKGIHVFKKPSFSK) are nuclear localization signal. Residues 119 to 150 (KKKEKDFKIKEKPKEEKHKEDKHKEKKSKDLT) show a composition bias toward basic and acidic residues. 2 tandem repeats follow at residues 133-137 (EEKHK) and 138-142 (EDKHK). Residues 133 to 142 (EEKHKEDKHK) are 2 X 5 AA tandem repeats of E-[D/E]-K-H-K. Positions 149 to 214 (LTAADVVKQW…PLVFRECIDF (66 aa)) are mediates association with membranes and could form transmembrane domains. A Rho-GAP domain is found at 187-383 (IPLIEAAERT…PLRWSNMATM (197 aa)). A mediates interaction with RALA and RALB region spans residues 398–495 (RRQEFLLNCL…LTEQEELVAM (98 aa)). 413–420 (AGVKDLSK) is a binding site for ATP. The tract at residues 494–510 (AMEQYLRRQIATEKEEI) is required to maintain nuclear localization. Residues 496–655 (EQYLRRQIAT…GKKLSSETLI (160 aa)) are mediates interaction with REPS1 and REPS2. Disordered regions lie at residues 520 to 548 (IQSR…EEEL) and 600 to 655 (LQEE…ETLI). A compositionally biased stretch (acidic residues) spans 532-548 (EEYSSESESESEDEEEL). Residues 619–630 (NLPETKAPKDQP) show a composition bias toward basic and acidic residues.

As to quaternary structure, interacts with the active, GTP-bound form of ralB and ralA.

The protein localises to the cell membrane. It is found in the cytoplasm. The protein resides in the cytosol. It localises to the cytoskeleton. Its subcellular location is the spindle pole. The protein localises to the nucleus. It is found in the mitochondrion. The protein resides in the cell projection. It localises to the lamellipodium. It catalyses the reaction an S-substituted glutathione(in) + ATP + H2O = an S-substituted glutathione(out) + ADP + phosphate + H(+). The enzyme catalyses ATP + H2O + xenobioticSide 1 = ADP + phosphate + xenobioticSide 2.. The catalysed reaction is leukotriene C4(in) + ATP + H2O = leukotriene C4(out) + ADP + phosphate + H(+). Functionally, multifunctional protein that functions as a downstream effector of ralA and ralB. As a GTPase-activating protein/GAP can inactivate CDC42 and RAC1 by stimulating their GTPase activity. As part of the Ral signaling pathway, may also regulate ligand-dependent EGF and insulin receptors-mediated endocytosis. During mitosis, may act as a scaffold protein in the phosphorylation of EPSIN/EPN1 by the mitotic kinase cyclin B-CDK1, preventing endocytosis during that phase of the cell cycle. During mitosis, also controls mitochondrial fission as an effector of ralA. Recruited to mitochondrion by ralA, acts as a scaffold to foster the mitotic kinase cyclin B-CDK1-mediated phosphorylation and activation of DNM1L. Acts on the cytoskeleton, to regulate pigment distribution and to regulate gastrulation. Its function is as follows. Could also function as a primary ATP-dependent active transporter for glutathione conjugates of electrophiles. May also actively catalyze the efflux of a wide range of substrates including xenobiotics like doxorubicin (DOX) contributing to cell multidrug resistance. The polypeptide is RalA-binding protein 1-A (ralbp1-a) (Xenopus laevis (African clawed frog)).